Consider the following 335-residue polypeptide: Avermitilol synthase (335 aa).

5 residues coordinate Mg(2+): aspartate 80, aspartate 84, asparagine 219, serine 223, and glutamate 227. Residues 80-84 (DDQFD) carry the DDXXD motif motif.

The protein belongs to the terpene synthase family. The cofactor is Mg(2+).

The enzyme catalyses (2E,6E)-farnesyl diphosphate + H2O = avermitilol + diphosphate. Functionally, catalyzes the cyclization of farnesyl diphosphate to avermitilol. The chain is Avermitilol synthase (tpc1) from Streptomyces avermitilis (strain ATCC 31267 / DSM 46492 / JCM 5070 / NBRC 14893 / NCIMB 12804 / NRRL 8165 / MA-4680).